We begin with the raw amino-acid sequence, 232 residues long: Adenosylcobinamide-GDP ribazoletransferase (232 aa).

Helical transmembrane passes span 24-44, 46-66, 96-116, 117-137, 153-173, 174-194, and 210-230; these read LWAF…ILYL, IPLA…LLHL, IAGV…LSML, PFYA…LGLA, GMNG…YLPV, VIYD…WYVI, and GAMA…SLCF.

It belongs to the CobS family. The cofactor is Mg(2+).

It is found in the cell membrane. The enzyme catalyses alpha-ribazole + adenosylcob(III)inamide-GDP = adenosylcob(III)alamin + GMP + H(+). It carries out the reaction alpha-ribazole 5'-phosphate + adenosylcob(III)inamide-GDP = adenosylcob(III)alamin 5'-phosphate + GMP + H(+). It functions in the pathway cofactor biosynthesis; adenosylcobalamin biosynthesis; adenosylcobalamin from cob(II)yrinate a,c-diamide: step 7/7. Its function is as follows. Joins adenosylcobinamide-GDP and alpha-ribazole to generate adenosylcobalamin (Ado-cobalamin). Also synthesizes adenosylcobalamin 5'-phosphate from adenosylcobinamide-GDP and alpha-ribazole 5'-phosphate. This is Adenosylcobinamide-GDP ribazoletransferase from Pyrococcus abyssi (strain GE5 / Orsay).